An 89-amino-acid polypeptide reads, in one-letter code: Protein S100-A6 (89 aa).

EF-hand domains are found at residues leucine 12–lysine 47 and leucine 48–isoleucine 83. Ca(2+) contacts are provided by threonine 28 and glutamate 33. Lysine 40 is modified (N6-acetyllysine). An N6-acetyllysine; alternate modification is found at lysine 47. Lysine 47 bears the N6-succinyllysine; alternate mark. Positions 61, 63, 65, 67, and 72 each coordinate Ca(2+).

Belongs to the S-100 family. Homodimer; head to tail assembly of 2 subunits. Interacts with CACYBP in a calcium-dependent manner. Interacts with ANXA2 and ANXA11 (via N-terminus). Interacts with SUGT1. Interacts with TP53; has higher affinity for TP53 that is phosphorylated on its N-terminal domain, and lower affinity for TP53 that is phosphorylated on its C-terminal domain. Interacts with tropomyosin. Interacts with FKBP4. Interacts with PPP5C (via TPR repeats); the interaction is calcium-dependent and modulates PPP5C activity. Interacts with TPPP; this interaction inhibits TPPP dimerization.

The protein localises to the nucleus envelope. It is found in the cytoplasm. The protein resides in the cell membrane. Its function is as follows. May function as calcium sensor and modulator, contributing to cellular calcium signaling. May function by interacting with other proteins, such as TPR-containing proteins, and indirectly play a role in many physiological processes such as the reorganization of the actin cytoskeleton and in cell motility. Binds 2 calcium ions. Calcium binding is cooperative. The chain is Protein S100-A6 (S100a6) from Rattus norvegicus (Rat).